The chain runs to 37 residues: Serrulin (37 aa).

Positions 16–37 are disordered; that stretch reads FGGGGIGGGGFGGGYGGGKIKG. Lysine amide is present on Lys-36.

Expressed in hemocytes (at protein level).

The protein resides in the secreted. Antimicrobial protein with activity against Gram-positive and Gram-negative bacteria, filamentous fungus, and yeast. Was tested against Micrococcus luteus A270 (MIC=0.5-1 uM), Echerichia coli SBS 363 (MIC=9-16 uM), Pseudomonas aeruginosa (MIC=0.01-0.3 uM), Aspergillus niger (MIC=3-6 uM), and Candida albicans MDM8 (MIC=1.5-3 uM). Has no hemolytic activity against human erythrocytes. The sequence is that of Serrulin from Tityus serrulatus (Brazilian scorpion).